A 130-amino-acid polypeptide reads, in one-letter code: Small ribosomal subunit protein uS8 (130 aa).

Belongs to the universal ribosomal protein uS8 family. Part of the 30S ribosomal subunit.

One of the primary rRNA binding proteins, it binds directly to 16S rRNA central domain where it helps coordinate assembly of the platform of the 30S subunit. The polypeptide is Small ribosomal subunit protein uS8 (Methanopyrus kandleri (strain AV19 / DSM 6324 / JCM 9639 / NBRC 100938)).